A 241-amino-acid polypeptide reads, in one-letter code: Methylosome subunit pICln (241 aa).

The segment at 88–112 is disordered; the sequence is EDKEAHMADQEEEESEDDDDDEEPI. Positions 97–112 are enriched in acidic residues; it reads QEEEESEDDDDDEEPI.

It belongs to the pICln (TC 1.A.47) family. Component of the methylosome, a 20S complex containing at least clns1a/picln, prmt5/skb1 and wdr77/mep50; may mediate snrpd1 and snrpd3 methylation. Forms a 6S pICln-Sm complex composed of clns1a/picln, snrpd1, snrpd2, snrpe, snrpf and snrpg; ring-like structure where clns1a/pICln mimics additional Sm proteins and which is unable to assemble into the core snRNP.

The protein localises to the cytoplasm. It is found in the cytosol. Its subcellular location is the nucleus. The protein resides in the cytoskeleton. Its function is as follows. Involved in both the assembly of spliceosomal snRNPs and the methylation of Sm proteins. Chaperone that regulates the assembly of spliceosomal U1, U2, U4 and U5 small nuclear ribonucleoproteins (snRNPs), the building blocks of the spliceosome, and thereby plays an important role in the splicing of cellular pre-mRNAs. Most spliceosomal snRNPs contain a common set of Sm proteins SNRPB, SNRPD1, SNRPD2, SNRPD3, SNRPE, SNRPF and SNRPG that assemble in a heptameric protein ring on the Sm site of the small nuclear RNA to form the core snRNP (Sm core). In the cytosol, the Sm proteins SNRPD1, SNRPD2, SNRPE, SNRPF and SNRPG are trapped in an inactive 6S pICln-Sm complex by the chaperone CLNS1A that controls the assembly of the core snRNP. Dissociation by the SMN complex of CLNS1A from the trapped Sm proteins and their transfer to an SMN-Sm complex triggers the assembly of core snRNPs and their transport to the nucleus. The polypeptide is Methylosome subunit pICln (clns1a) (Xenopus laevis (African clawed frog)).